We begin with the raw amino-acid sequence, 481 residues long: Ribulose bisphosphate carboxylase large chain (481 aa).

Residues 1 to 2 (MS) constitute a propeptide that is removed on maturation. P3 carries the post-translational modification N-acetylproline. Residue K14 is modified to N6,N6,N6-trimethyllysine. Positions 123 and 173 each coordinate substrate. Residue K175 is the Proton acceptor of the active site. Residue K177 coordinates substrate. Residues K201, D203, and E204 each coordinate Mg(2+). N6-carboxylysine is present on K201. The Proton acceptor role is filled by H294. Substrate contacts are provided by R295, H327, and S379.

Belongs to the RuBisCO large chain family. Type I subfamily. Heterohexadecamer of 8 large chains and 8 small chains; disulfide-linked. The disulfide link is formed within the large subunit homodimers. Requires Mg(2+) as cofactor. The disulfide bond which can form in the large chain dimeric partners within the hexadecamer appears to be associated with oxidative stress and protein turnover.

The protein localises to the plastid. It carries out the reaction 2 (2R)-3-phosphoglycerate + 2 H(+) = D-ribulose 1,5-bisphosphate + CO2 + H2O. The catalysed reaction is D-ribulose 1,5-bisphosphate + O2 = 2-phosphoglycolate + (2R)-3-phosphoglycerate + 2 H(+). Functionally, ruBisCO catalyzes two reactions: the carboxylation of D-ribulose 1,5-bisphosphate, the primary event in carbon dioxide fixation, as well as the oxidative fragmentation of the pentose substrate in the photorespiration process. Both reactions occur simultaneously and in competition at the same active site. This is Ribulose bisphosphate carboxylase large chain from Cuscuta sandwichiana (Kauna'oa).